Here is an 85-residue protein sequence, read N- to C-terminus: Kappa-theraphotoxin-Cg1d (85 aa).

The signal sequence occupies residues 1-21 (MKVSVLITLAVLGVMFVWASA). A propeptide spanning residues 22 to 51 (AELEERGSDQRDSPAWLKSMERIFQSEERE) is cleaved from the precursor. Cystine bridges form between cysteine 52/cysteine 66, cysteine 59/cysteine 71, and cysteine 65/cysteine 78.

This sequence belongs to the neurotoxin 10 (Hwtx-1) family. 28 (Jztx-11) subfamily. In terms of tissue distribution, expressed by the venom gland.

The protein resides in the secreted. Its function is as follows. Probable ion channel inhibitor. This chain is Kappa-theraphotoxin-Cg1d, found in Chilobrachys guangxiensis (Chinese earth tiger tarantula).